The chain runs to 246 residues: Small ribosomal subunit protein uS3 (246 aa).

The KH type-2 domain maps to Ile19 to Ala98. A disordered region spans residues Leu218 to Ser246. The span at Leu226–Glu237 shows a compositional bias: basic and acidic residues.

It belongs to the universal ribosomal protein uS3 family. Part of the 30S ribosomal subunit.

In terms of biological role, binds the lower part of the 30S subunit head. The chain is Small ribosomal subunit protein uS3 from Aeropyrum pernix (strain ATCC 700893 / DSM 11879 / JCM 9820 / NBRC 100138 / K1).